Consider the following 394-residue polypeptide: Ribulose bisphosphate carboxylase large chain (394 aa).

Lysine 5 carries the N6,N6,N6-trimethyllysine modification. Positions 114 and 164 each coordinate substrate. Lysine 166 acts as the Proton acceptor in catalysis. Lysine 168 is a binding site for substrate. Positions 192, 194, and 195 each coordinate Mg(2+). An N6-carboxylysine modification is found at lysine 192. Histidine 285 acts as the Proton acceptor in catalysis. Residues arginine 286, histidine 318, and serine 370 each contribute to the substrate site.

This sequence belongs to the RuBisCO large chain family. Type I subfamily. In terms of assembly, heterohexadecamer of 8 large chains and 8 small chains. Requires Mg(2+) as cofactor.

It is found in the plastid. It localises to the chloroplast. It catalyses the reaction 2 (2R)-3-phosphoglycerate + 2 H(+) = D-ribulose 1,5-bisphosphate + CO2 + H2O. The catalysed reaction is D-ribulose 1,5-bisphosphate + O2 = 2-phosphoglycolate + (2R)-3-phosphoglycerate + 2 H(+). Functionally, ruBisCO catalyzes two reactions: the carboxylation of D-ribulose 1,5-bisphosphate, the primary event in carbon dioxide fixation, as well as the oxidative fragmentation of the pentose substrate in the photorespiration process. Both reactions occur simultaneously and in competition at the same active site. In Nymphaea odorata (White water lily), this protein is Ribulose bisphosphate carboxylase large chain (rbcL).